The chain runs to 291 residues: Transmembrane protein 41B (291 aa).

The span at 1-11 shows a compositional bias: basic and acidic residues; the sequence is MAKGRVADRSP. The interval 1-43 is disordered; sequence MAKGRVADRSPTEMLHSTPAGDRAVRTQGSAAPGSKDHLNEKP. Residue T18 is modified to Phosphothreonine. Position 35 is a phosphoserine (S35). The next 6 helical transmembrane spans lie at 52–72, 109–129, 147–169, 197–217, 225–245, and 262–282; these read TSLL…FLVY, FYVQ…TFAI, LALF…LSYL, LINY…FINI, PLKV…FVAI, and SWSS…PAIF. The tract at residues 140 to 251 is VTT domain; required for its function in autophagy; it reads GFLYPFPLAL…FVAIKAGTTL (112 aa).

Belongs to the TMEM41 family. In terms of assembly, interacts with VMP1. Interacts with COPA, COPB1, VDAC1 and ERLIN2. Interacts with ATG2A. Interacts with SURF4. In terms of tissue distribution, expressed in brain, spinal cord, kidney and first lumbar dorsal root ganglia during postnatal development. Expressed in motor neurons and proprioceptive neurons.

It localises to the endoplasmic reticulum membrane. The protein resides in the endomembrane system. The enzyme catalyses a 1,2-diacyl-sn-glycero-3-phospho-L-serine(in) = a 1,2-diacyl-sn-glycero-3-phospho-L-serine(out). The catalysed reaction is cholesterol(in) = cholesterol(out). It catalyses the reaction a 1,2-diacyl-sn-glycero-3-phosphocholine(in) = a 1,2-diacyl-sn-glycero-3-phosphocholine(out). It carries out the reaction a 1,2-diacyl-sn-glycero-3-phosphoethanolamine(in) = a 1,2-diacyl-sn-glycero-3-phosphoethanolamine(out). Phospholipid scramblase involved in lipid homeostasis and membrane dynamics processes. Has phospholipid scramblase activity toward cholesterol and phosphatidylserine, as well as phosphatidylethanolamine and phosphatidylcholine. Required for autophagosome formation: participates in early stages of autophagosome biogenesis at the endoplasmic reticulum (ER) membrane by reequilibrating the leaflets of the ER as lipids are extracted by ATG2 (ATG2A or ATG2B) to mediate autophagosome assembly. In addition to autophagy, involved in other processes in which phospholipid scramblase activity is required. Required for normal motor neuron development. The protein is Transmembrane protein 41B of Mus musculus (Mouse).